Reading from the N-terminus, the 397-residue chain is S-adenosylmethionine:tRNA ribosyltransferase-isomerase (397 aa).

This sequence belongs to the QueA family. Monomer.

Its subcellular location is the cytoplasm. The catalysed reaction is 7-aminomethyl-7-carbaguanosine(34) in tRNA + S-adenosyl-L-methionine = epoxyqueuosine(34) in tRNA + adenine + L-methionine + 2 H(+). It functions in the pathway tRNA modification; tRNA-queuosine biosynthesis. Transfers and isomerizes the ribose moiety from AdoMet to the 7-aminomethyl group of 7-deazaguanine (preQ1-tRNA) to give epoxyqueuosine (oQ-tRNA). In Nostoc sp. (strain PCC 7120 / SAG 25.82 / UTEX 2576), this protein is S-adenosylmethionine:tRNA ribosyltransferase-isomerase.